A 104-amino-acid chain; its full sequence is MTTQFDNVSVVKKANIYFDGKCVSHTVLFADGTKKTIGIIFPSTLKFNTGAAEIMELNAGKCRIRLAGATEWNTYEGGQQFEVPANSSFDIETVDTLDYVCHFI.

The protein belongs to the nucleoside phosphorylase PpnP family.

It carries out the reaction a purine D-ribonucleoside + phosphate = a purine nucleobase + alpha-D-ribose 1-phosphate. The catalysed reaction is adenosine + phosphate = alpha-D-ribose 1-phosphate + adenine. It catalyses the reaction cytidine + phosphate = cytosine + alpha-D-ribose 1-phosphate. The enzyme catalyses guanosine + phosphate = alpha-D-ribose 1-phosphate + guanine. It carries out the reaction inosine + phosphate = alpha-D-ribose 1-phosphate + hypoxanthine. The catalysed reaction is thymidine + phosphate = 2-deoxy-alpha-D-ribose 1-phosphate + thymine. It catalyses the reaction uridine + phosphate = alpha-D-ribose 1-phosphate + uracil. The enzyme catalyses xanthosine + phosphate = alpha-D-ribose 1-phosphate + xanthine. Catalyzes the phosphorolysis of diverse nucleosides, yielding D-ribose 1-phosphate and the respective free bases. Can use uridine, adenosine, guanosine, cytidine, thymidine, inosine and xanthosine as substrates. Also catalyzes the reverse reactions. In Herminiimonas arsenicoxydans, this protein is Pyrimidine/purine nucleoside phosphorylase.